Here is a 113-residue protein sequence, read N- to C-terminus: U11-theraphotoxin-Hhn1p (113 aa).

The N-terminal stretch at methionine 1–alanine 21 is a signal peptide. Positions aspartate 22–arginine 74 are excised as a propeptide. The segment at glutamate 61–aspartate 83 is disordered. 3 disulfides stabilise this stretch: cysteine 75–cysteine 90, cysteine 82–cysteine 95, and cysteine 89–cysteine 110.

It belongs to the neurotoxin 14 (magi-1) family. 01 (HNTX-16) subfamily. As to expression, expressed by the venom gland.

It localises to the secreted. Functionally, probable ion channel inhibitor. In Cyriopagopus hainanus (Chinese bird spider), this protein is U11-theraphotoxin-Hhn1p.